We begin with the raw amino-acid sequence, 132 residues long: Agouti-signaling protein (132 aa).

The signal sequence occupies residues 1-22; it reads MDVTRLLLATLLVFLCFFAAYS. N-linked (GlcNAc...) asparagine glycosylation occurs at Asn39. Residues 61-93 are disordered; that stretch reads KISRKEAEKKRSSKKEASKQKVARPRTPLSVPC. The span at 64–79 shows a compositional bias: basic and acidic residues; that stretch reads RKEAEKKRSSKKEASK. 5 disulfides stabilise this stretch: Cys93–Cys108, Cys100–Cys114, Cys107–Cys125, Cys111–Cys132, and Cys116–Cys123. An Agouti domain is found at 93–132; it reads CVSTRGSCKPPAPACCHPCASCQCRFFRSACSCRVLNVNC.

The protein resides in the secreted. Functionally, involved in the regulation of melanogenesis. The binding of ASP to MC1R precludes alpha-MSH initiated signaling and thus blocks production of cAMP, leading to a down-regulation of eumelanogenesis (brown/black pigment) and thus increasing synthesis of pheomelanin (yellow/red pigment). The polypeptide is Agouti-signaling protein (ASIP) (Callithrix geoffroyi (Geoffroy's marmoset)).